Consider the following 423-residue polypeptide: MQLRASVLLSFLGLASVGHAGNVENNHNVCTVRANGGHQDDVPNIMAAFKECGNGGTIIFPEDQSYWIATRLHPTLKDVAIEWRGKWTFSDNLTYWRNNSYPIAFQNHHAGFIISGDNITINGYGTGGIDGNGNTWYTAEKGDTQPGRPMPFVFWNVSEVIVDSFYVKDPPLWSVNIMNGTNMRFNNIYCNATAVDAPWGDNWVQNTDGFDTMDATNIQLTNFVYQGGDDCIAIKPRSYNIDIQNVTCRGGNGIAIGSLGQYLEDSSVANIRVDKVNIIRYNEDMHNSAYLKTWVGALVPQSSYESAGVPRGDGWGSIRNVLFSNFNVQGASAGPSISQDSGDNGSYAGTSKMSISNVAFVNFTGWVDTEKSVVSTVSCSEVHPCYNIDYDNVVLYPGKNATTAGTGSCKYTADGGVHGLSGC.

Residues 1-20 (MQLRASVLLSFLGLASVGHA) form the signal peptide. N-linked (GlcNAc...) asparagine glycosylation is found at Asn-92, Asn-98, Asn-118, Asn-156, Asn-179, and Asn-191. PbH1 repeat units follow at residues 215–236 (ATNIQLTNFVYQGGDDCIAIKP) and 238–258 (SYNIDIQNVTCRGGNGIAIGS). Catalysis depends on Asp-229, which acts as the Proton donor. A disulfide bridge links Cys-231 with Cys-248. N-linked (GlcNAc...) asparagine glycosylation is found at Asn-245, Asn-344, and Asn-362. Cysteines 379 and 385 form a disulfide. N-linked (GlcNAc...) asparagine glycosylation occurs at Asn-400.

It belongs to the glycosyl hydrolase 28 family.

The protein localises to the secreted. It carries out the reaction [(1-&gt;4)-alpha-D-galacturonosyl](n) + H2O = alpha-D-galacturonate + [(1-&gt;4)-alpha-D-galacturonosyl](n-1). Its function is as follows. Specific in hydrolyzing the terminal glycosidic bond of polygalacturonic acid and oligogalacturonates. This Aspergillus niger (strain ATCC MYA-4892 / CBS 513.88 / FGSC A1513) protein is Putative galacturan 1,4-alpha-galacturonidase C (rgxC).